We begin with the raw amino-acid sequence, 622 residues long: Mitochondrial distribution and morphology protein 34 (622 aa).

Residues 1–204 (MSFKVNWNSL…LPTLIHQLSL (204 aa)) form the SMP-LTD domain. Disordered stretches follow at residues 364-393 (YSNK…DNTV), 442-468 (LETM…RAYQ), and 572-592 (LDGG…NFRP). A compositionally biased stretch (basic residues) spans 372–385 (KPKRRRIKVHKKSK). Residues 446–455 (STGSSSSASS) show a composition bias toward low complexity. Polar residues predominate over residues 577-587 (NSANTNNSSGG).

This sequence belongs to the MDM34 family. As to quaternary structure, component of the ER-mitochondria encounter structure (ERMES) or MDM complex, composed of MMM1, MDM10, MDM12 and MDM34.

Its subcellular location is the mitochondrion outer membrane. Its function is as follows. Component of the ERMES/MDM complex, which serves as a molecular tether to connect the endoplasmic reticulum (ER) and mitochondria. Components of this complex are involved in the control of mitochondrial shape and protein biogenesis, and function in nonvesicular lipid trafficking between the ER and mitochondria. MDM34 is required for the interaction of the ER-resident membrane protein MMM1 and the outer mitochondrial membrane-resident beta-barrel protein MDM10. The sequence is that of Mitochondrial distribution and morphology protein 34 from Candida albicans (strain WO-1) (Yeast).